Consider the following 316-residue polypeptide: Acetaldehyde dehydrogenase (316 aa).

12 to 15 (SGNI) contacts NAD(+). Cys132 functions as the Acyl-thioester intermediate in the catalytic mechanism. Residues 163-171 (SAGPGTRAN) and Asn289 contribute to the NAD(+) site.

Belongs to the acetaldehyde dehydrogenase family.

It catalyses the reaction acetaldehyde + NAD(+) + CoA = acetyl-CoA + NADH + H(+). This chain is Acetaldehyde dehydrogenase (bphG), found in Bordetella avium (strain 197N).